The primary structure comprises 358 residues: MTARLRPELADIPAYTPGKTVPGAIKIASNETVHGPLPSVRAAIEKATDQLNRYPDNGYLELREHLASHLDKNLGAGAFTPEQIAVGCGSVSLCQQLIQITSSVGDEVIFAWRSFEIYPLQVRTAGATPVQVPLRDHTHDLDAMLAAITDRTRLIFVCNPNNPTSTVVDPAALKRFVEAVPPHILVVIDEAYVEYIRGDQVPDSFGLVRAHPNVVVLRTFSKAYGLAGLRIGYAVADADIVTALGKVYVPFSATSISQAAAIASIDAADELLARTDQVVAERDRVTAALREAGFTLPPSQSNFVWLPLAERTLDFVRRAAENRLVVRPYGEDGVRVTIAAPHENDAFLEFARNWIGQP.

The residue at position 222 (lysine 222) is an N6-(pyridoxal phosphate)lysine.

The protein belongs to the class-II pyridoxal-phosphate-dependent aminotransferase family. Homodimer. Requires pyridoxal 5'-phosphate as cofactor.

The catalysed reaction is an aromatic L-alpha-amino acid + 2-oxoglutarate = an aromatic oxo-acid + L-glutamate. Its function is as follows. Aminotransferase that catalyzes the conversion of aromatic amino acids and 2-oxoglutarate into corresponding aromatic oxo acids and L-glutamate. This Mycobacterium sp. (strain KMS) protein is Aromatic amino acid aminotransferase.